Reading from the N-terminus, the 462-residue chain is Golgi-associated PDZ and coiled-coil motif-containing protein (462 aa).

Positions 83–194 (KAQSVSQINH…EDEALRGHIA (112 aa)) form a coiled coil. The 84-residue stretch at 288 to 371 (KVLLLKEDHE…EIEFEVVYVA (84 aa)) folds into the PDZ domain. Residues 427 to 449 (TDTHENGDLGTASETPLDDGASK) form a disordered region.

Homooligomer. Interacts with FZD5. Interacts with FZD8. Interacts with GRID2 and BECN1. Interacts with CSPG5. Interacts with CLCN3. Interacts with STX6. Interacts with CFTR. Interacts with ASIC3. Interacts with GOLGA3. Interacts with NLGN1. Interacts with RHOQ. Interacts with MARCHF2; the interaction leads to CFTR ubiquitination and degradation. May interact with CACNG2. Interacts with CCDC62.

The protein resides in the cytoplasm. Its subcellular location is the golgi apparatus membrane. The protein localises to the golgi apparatus. It localises to the trans-Golgi network membrane. It is found in the synapse. The protein resides in the postsynaptic density. Its subcellular location is the cell projection. The protein localises to the dendrite. Its function is as follows. Plays a role in intracellular protein trafficking and degradation. May regulate CFTR chloride currents and acid-induced ASIC3 currents by modulating cell surface expression of both channels. May also regulate the intracellular trafficking of the ADR1B receptor. May play a role in autophagy. Together with MARCHF2 mediates the ubiquitination and lysosomal degradation of CFTR. Overexpression results in CFTR intracellular retention and degradation in the lysosomes. In Pongo abelii (Sumatran orangutan), this protein is Golgi-associated PDZ and coiled-coil motif-containing protein (GOPC).